The sequence spans 238 residues: MEFQHIDLNQTHIRLTTDLKNNNLEKYILNLRKELEHYITKNKDFQLSLEPVNHDEEDLSEIIKRMYTASSYCDVGPMACVAGCISEMSLDYLISKKSEYSIIENGGDIAIVNNKKAVCGIYSNNPILGNKIGFELKARKTPLGICTSSGKIGHSISFGYADSVTVLSKKASVADGLATKIANEAVGQNSEYKVSNALEASENYKDLFEGVLIISQDNVGSIGKLPKIVETEEFNVKM.

This sequence belongs to the UPF0280 family.

The polypeptide is UPF0280 protein Msm_0088 (Methanobrevibacter smithii (strain ATCC 35061 / DSM 861 / OCM 144 / PS)).